Reading from the N-terminus, the 415-residue chain is Maltose excess protein 1, chloroplastic (415 aa).

The disordered stretch occupies residues 74–93; the sequence is SESDSDSDFPHENQQGNPGL. Transmembrane regions (helical) follow at residues 139-159, 176-196, 199-219, 231-251, 252-272, 286-306, 322-342, 345-365, and 373-393; these read ALSA…LSLL, LGVV…AMPI, FVAT…YYFG, DVIT…TFVP, LVPN…AAII, FVGS…PVSQ, SITM…ALFI, LMWL…NILC, and SQSF…LALW.

In terms of tissue distribution, expressed in leaves and roots. Expressed in root cap cells.

It is found in the plastid. The protein localises to the chloroplast inner membrane. In terms of biological role, probable maltose transporter. Essential for the conversion of starch to sucrose in leaves at night, probably via the export of maltose from the chloroplast. Required for root cap cells formation. This is Maltose excess protein 1, chloroplastic (MEX1) from Arabidopsis thaliana (Mouse-ear cress).